Reading from the N-terminus, the 506-residue chain is MLEKLIILDFGSQTTQLIARRIRELNTYCEVYPYNKLPEDLSGVRGIILSGSPYSVYDSKAFRIELSELRGKLPLLGICYGAQSLVHQAGGKVEPCDSREYGRTHLTLRQPEDALLTGLQSGTTVWMSHGDTITSLPEGFEVIAGTEDVPNAAFRIRGEKTWGVQFHPEIYHSEEGTKLLGNFLDICGMKRDWTPASFIEATVQELRERLGDDKVILALSGGVDSSVVAVLLNKAIGRNLTCIFVDHGLLRKGEFERVLQDYEHLGLNVIGVNAKEKFFAALSGVTDPEQKRKIIGRGFIEVFDEEARKLKDIKWLGQGTIYPDVIESLSITGMVIKSHHNVGGLPERMNLRLVEPLRMLFKDEVRRVGLELGMMPHLIHRHPFPGPGLGIRILGEITEEKATILQNADDIYMSLMREWGLYDQVWQAGAILLPVRSVGVMGDERTYEYTVALRAVTSMDAMSADWVHLPYDFLAKVSNEIINKVRGVNRVVYDISSKPPSTIEWE.

One can recognise a Glutamine amidotransferase type-1 domain in the interval 4-192; that stretch reads KLIILDFGSQ…FLDICGMKRD (189 aa). The active-site Nucleophile is the C79. Residues H167 and E169 contribute to the active site. Residues 193-381 form the GMPS ATP-PPase domain; sequence WTPASFIEAT…LGMMPHLIHR (189 aa). An ATP-binding site is contributed by 220–226; the sequence is SGGVDSS.

In terms of assembly, homodimer.

It catalyses the reaction XMP + L-glutamine + ATP + H2O = GMP + L-glutamate + AMP + diphosphate + 2 H(+). The protein operates within purine metabolism; GMP biosynthesis; GMP from XMP (L-Gln route): step 1/1. Catalyzes the synthesis of GMP from XMP. The polypeptide is GMP synthase [glutamine-hydrolyzing] (Porphyromonas gingivalis (strain ATCC 33277 / DSM 20709 / CIP 103683 / JCM 12257 / NCTC 11834 / 2561)).